A 587-amino-acid polypeptide reads, in one-letter code: Probable phosphoribomutase (587 aa).

Substrate is bound by residues T49, R53, and 149–150 (SH). The Phosphoserine intermediate role is filled by S149. 4 residues coordinate Mg(2+): S149, D306, D308, and D310. S149 bears the Phosphoserine mark. Residues 310–311 (DR), T380, 404–406 (EEA), and K418 each bind substrate.

It belongs to the phosphohexose mutase family. It depends on Mg(2+) as a cofactor.

The protein resides in the cytoplasm. It is found in the nucleus. The enzyme catalyses alpha-D-ribose 1-phosphate = D-ribose 5-phosphate. Its function is as follows. Converts ribose 1-phosphate to ribose 5-phosphate. Involved in ribose salvage via the pentose phosphate pathway. This is Probable phosphoribomutase from Schizosaccharomyces pombe (strain 972 / ATCC 24843) (Fission yeast).